Here is a 298-residue protein sequence, read N- to C-terminus: Ribosomal protein uL3 glutamine methyltransferase (298 aa).

Belongs to the protein N5-glutamine methyltransferase family. PrmB subfamily.

The enzyme catalyses L-glutaminyl-[ribosomal protein uL3] + S-adenosyl-L-methionine = N(5)-methyl-L-glutaminyl-[ribosomal protein uL3] + S-adenosyl-L-homocysteine + H(+). In terms of biological role, methylates large ribosomal subunit protein uL3 on a specific glutamine residue. The polypeptide is Ribosomal protein uL3 glutamine methyltransferase (Bordetella pertussis (strain Tohama I / ATCC BAA-589 / NCTC 13251)).